Here is a 286-residue protein sequence, read N- to C-terminus: tRNA (guanine-N(7)-)-methyltransferase (286 aa).

2 positions are modified to phosphoserine: serine 7 and serine 59. Residues glycine 103, glutamate 126–isoleucine 127, asparagine 161–alanine 162, and cysteine 181 contribute to the S-adenosyl-L-methionine site. The active site involves aspartate 184. Position 259-261 (threonine 259–glutamate 261) interacts with S-adenosyl-L-methionine.

It belongs to the class I-like SAM-binding methyltransferase superfamily. TrmB family. Forms a complex with TRM82.

The protein localises to the nucleus. The catalysed reaction is guanosine(46) in tRNA + S-adenosyl-L-methionine = N(7)-methylguanosine(46) in tRNA + S-adenosyl-L-homocysteine. The protein operates within tRNA modification; N(7)-methylguanine-tRNA biosynthesis. Methyltransferase that catalyzes the formation of N(7)-methylguanine at position 46 (m7G46) in tRNA, a modification required to maintain stability of tRNAs; its absence resulting in tRNA decay. Both the D-stem and T-stem structures of tRNAs are required for efficient methyltransferase activity. The sequence is that of tRNA (guanine-N(7)-)-methyltransferase from Saccharomyces cerevisiae (strain YJM789) (Baker's yeast).